A 139-amino-acid chain; its full sequence is Large ribosomal subunit protein uL16 (139 aa).

Residues 1-17 (MLMPKRVKYRKTQRGRM) show a composition bias toward basic residues. Residues 1–24 (MLMPKRVKYRKTQRGRMKGNSGRG) are disordered.

The protein belongs to the universal ribosomal protein uL16 family. Part of the 50S ribosomal subunit.

Functionally, binds 23S rRNA and is also seen to make contacts with the A and possibly P site tRNAs. In Pelodictyon phaeoclathratiforme (strain DSM 5477 / BU-1), this protein is Large ribosomal subunit protein uL16.